Here is a 576-residue protein sequence, read N- to C-terminus: Proline--tRNA ligase (576 aa).

It belongs to the class-II aminoacyl-tRNA synthetase family. ProS type 1 subfamily. Homodimer.

It is found in the cytoplasm. It catalyses the reaction tRNA(Pro) + L-proline + ATP = L-prolyl-tRNA(Pro) + AMP + diphosphate. Catalyzes the attachment of proline to tRNA(Pro) in a two-step reaction: proline is first activated by ATP to form Pro-AMP and then transferred to the acceptor end of tRNA(Pro). As ProRS can inadvertently accommodate and process non-cognate amino acids such as alanine and cysteine, to avoid such errors it has two additional distinct editing activities against alanine. One activity is designated as 'pretransfer' editing and involves the tRNA(Pro)-independent hydrolysis of activated Ala-AMP. The other activity is designated 'posttransfer' editing and involves deacylation of mischarged Ala-tRNA(Pro). The misacylated Cys-tRNA(Pro) is not edited by ProRS. The polypeptide is Proline--tRNA ligase (Dechloromonas aromatica (strain RCB)).